Reading from the N-terminus, the 183-residue chain is ATP-dependent protease subunit HslV (183 aa).

The active site involves threonine 12. Positions 166, 169, and 172 each coordinate Na(+).

Belongs to the peptidase T1B family. HslV subfamily. In terms of assembly, a double ring-shaped homohexamer of HslV is capped on each side by a ring-shaped HslU homohexamer. The assembly of the HslU/HslV complex is dependent on binding of ATP.

It localises to the cytoplasm. It catalyses the reaction ATP-dependent cleavage of peptide bonds with broad specificity.. With respect to regulation, allosterically activated by HslU binding. In terms of biological role, protease subunit of a proteasome-like degradation complex believed to be a general protein degrading machinery. The protein is ATP-dependent protease subunit HslV of Afipia carboxidovorans (strain ATCC 49405 / DSM 1227 / KCTC 32145 / OM5) (Oligotropha carboxidovorans).